The following is a 592-amino-acid chain: Aspartate--tRNA ligase (592 aa).

Glu171 is a binding site for L-aspartate. Residues 195 to 198 form an aspartate region; that stretch reads QLFK. Residue Arg217 coordinates L-aspartate. ATP contacts are provided by residues 217–219 and Gln226; that span reads RDE. Residue His448 coordinates L-aspartate. Glu482 contributes to the ATP binding site. Arg489 provides a ligand contact to L-aspartate. 534–537 serves as a coordination point for ATP; that stretch reads GLDR.

This sequence belongs to the class-II aminoacyl-tRNA synthetase family. Type 1 subfamily. Homodimer.

The protein resides in the cytoplasm. The catalysed reaction is tRNA(Asp) + L-aspartate + ATP = L-aspartyl-tRNA(Asp) + AMP + diphosphate. In terms of biological role, catalyzes the attachment of L-aspartate to tRNA(Asp) in a two-step reaction: L-aspartate is first activated by ATP to form Asp-AMP and then transferred to the acceptor end of tRNA(Asp). This is Aspartate--tRNA ligase from Vibrio vulnificus (strain YJ016).